The following is a 639-amino-acid chain: 3-oxocholoyl-CoA 4-desaturase (639 aa).

Residue Q101 participates in FMN binding. Position 155 to 158 (155 to 158 (HAAH)) interacts with substrate. Residue Y160 is the Proton donor of the active site. FMN-binding positions include R208, R286, and 308–309 (GR). C332 and C335 together coordinate [4Fe-4S] cluster. Q337 provides a ligand contact to FAD. 2 residues coordinate [4Fe-4S] cluster: C339 and C353. FAD contacts are provided by A383, E402, Q410, K420, and V447.

It in the N-terminal section; belongs to the NADH:flavin oxidoreductase/NADH oxidase family. The cofactor is FMN. FAD serves as cofactor. [4Fe-4S] cluster is required as a cofactor.

The catalysed reaction is 7alpha,12alpha-dihydroxy-3-oxochol-24-oyl-CoA + NAD(+) = 7alpha,12alpha-dihydroxy-3-oxochol-4-en-24-oyl-CoA + NADH + H(+). The enzyme catalyses 7alpha-hydroxy-3-oxochol-24-oyl-CoA + NAD(+) = 7alpha-hydroxy-3-oxochol-4-en-24-oyl-CoA + NADH + H(+). It functions in the pathway lipid metabolism; bile acid degradation. In terms of biological role, stereo-specific NAD(H)-dependent 3-oxo-delta4-cholenoic acid oxidoreductase involved in bile acid 7alpha-dehydroxylation. This Clostridium scindens (strain JCM 10418 / VPI 12708) protein is 3-oxocholoyl-CoA 4-desaturase.